A 343-amino-acid polypeptide reads, in one-letter code: Phosphate acyltransferase (343 aa).

It belongs to the PlsX family. In terms of assembly, homodimer. Probably interacts with PlsY.

The protein resides in the cytoplasm. It catalyses the reaction a fatty acyl-[ACP] + phosphate = an acyl phosphate + holo-[ACP]. The protein operates within lipid metabolism; phospholipid metabolism. Functionally, catalyzes the reversible formation of acyl-phosphate (acyl-PO(4)) from acyl-[acyl-carrier-protein] (acyl-ACP). This enzyme utilizes acyl-ACP as fatty acyl donor, but not acyl-CoA. The chain is Phosphate acyltransferase from Coxiella burnetii (strain RSA 331 / Henzerling II).